The chain runs to 226 residues: ATP-dependent dethiobiotin synthetase BioD (226 aa).

12–17 (DAGKTV) serves as a coordination point for ATP. Position 16 (T16) interacts with Mg(2+). Residue K39 is part of the active site. Position 43 (S43) interacts with substrate. ATP contacts are provided by residues D47, 108–111 (EGVG), 168–169 (NC), 200–202 (PYL), and N207. 2 residues coordinate Mg(2+): D47 and E108.

Belongs to the dethiobiotin synthetase family. In terms of assembly, homodimer. Mg(2+) is required as a cofactor.

It is found in the cytoplasm. The enzyme catalyses (7R,8S)-7,8-diammoniononanoate + CO2 + ATP = (4R,5S)-dethiobiotin + ADP + phosphate + 3 H(+). It catalyses the reaction (7R,8S)-8-amino-7-(carboxyamino)nonanoate + ATP = (4R,5S)-dethiobiotin + ADP + phosphate + H(+). It functions in the pathway cofactor biosynthesis; biotin biosynthesis; biotin from 7,8-diaminononanoate: step 1/2. Its function is as follows. Catalyzes a mechanistically unusual reaction, the ATP-dependent insertion of CO2 between the N7 and N8 nitrogen atoms of 7,8-diaminopelargonic acid (DAPA, also called 7,8-diammoniononanoate) to form a ureido ring. This cyanobacterium does not encode bioA (which catalyzes the formation of the precursor for this reaction in the cannonical pathway), instead it encodes bioU, which replaces bioA and also performs the first half of the cannonical BioD reaction. Thus in this organism BioD has a different substrate. The sequence is that of ATP-dependent dethiobiotin synthetase BioD from Cyanothece sp. (strain PCC 7425 / ATCC 29141).